The primary structure comprises 188 residues: MGIDLIAGGKSKKTKRTEPKSDDVYLKLLVKANRYLVRRTESKFNAVILKRLFMSKVNKAPLSLSRLVRYMDGKDGKIAVIVGTVTDDVRIEDVPALTVTALRFTESARARIHKAGGECLTFDQLALPCPTWSENTVLLRGPKNTREAVKHFGPAPGVPHSHTKPYVRQTGKKIEIARGRRRSRGFKV.

The protein belongs to the eukaryotic ribosomal protein eL18 family.

This is Large ribosomal subunit protein eL18z (RPL18A) from Arabidopsis thaliana (Mouse-ear cress).